A 406-amino-acid polypeptide reads, in one-letter code: MTFSVDKVRADFPVLSREVNGLPLAYLDSAASAQKPSQVIDAEAEFYRHGYAAVHRGIHTLSAQATEKMENVRKRASLFINARSAEELVFVRGTTEGINLVANSWGNSNVRAGDNIIISQMEHHANIVPWQMLCARVGAELRVIPLNPDGTLQLETLPTLFDEKTRLLAITHVSNVLGTENPLAEMITLAHQHGAKVLVDGAQAVMHHPVDVQALDCDFYVFSGHKLYGPTGIGILYVKEALLQEMPPWEGGGSMIATVSLSEGTTWTKAPWRFEAGTPNTGGIIGLGAALEYVSALGLNSIAEYEQNLMHYALSQLESVPDLTLYGQQNRLGVIAFNLGKHHAYDVGSFLDNYGIAVRTGHHCAMPLMAYYNVPAMCRASLAMYNTHEEVERLVTGLQRIHRLLG.

The residue at position 226 (lysine 226) is an N6-(pyridoxal phosphate)lysine. Cysteine 364 functions as the Cysteine persulfide intermediate in the catalytic mechanism.

It belongs to the class-V pyridoxal-phosphate-dependent aminotransferase family. Csd subfamily. In terms of assembly, homodimer. Interacts with SufE and the SufBCD complex composed of SufB, SufC and SufD. The interaction with SufE is required to mediate the direct transfer of the sulfur atom from the S-sulfanylcysteine. Pyridoxal 5'-phosphate is required as a cofactor.

The protein resides in the cytoplasm. It catalyses the reaction (sulfur carrier)-H + L-cysteine = (sulfur carrier)-SH + L-alanine. The catalysed reaction is L-selenocysteine + AH2 = hydrogenselenide + L-alanine + A + H(+). It participates in cofactor biosynthesis; iron-sulfur cluster biosynthesis. Functionally, cysteine desulfurases mobilize the sulfur from L-cysteine to yield L-alanine, an essential step in sulfur metabolism for biosynthesis of a variety of sulfur-containing biomolecules. Component of the suf operon, which is activated and required under specific conditions such as oxidative stress and iron limitation. Acts as a potent selenocysteine lyase in vitro, that mobilizes selenium from L-selenocysteine. Selenocysteine lyase activity is however unsure in vivo. The polypeptide is Cysteine desulfurase (sufS) (Shigella flexneri).